A 99-amino-acid chain; its full sequence is Plastocyanin (99 aa).

The Plastocyanin-like domain occupies 1-99 (IEVLLGGGDG…AGMVGKVTVN (99 aa)). His37, Cys84, His87, and Met92 together coordinate Cu cation.

It belongs to the plastocyanin family. Cu(2+) is required as a cofactor.

The protein resides in the plastid. The protein localises to the chloroplast thylakoid membrane. Functionally, participates in electron transfer between P700 and the cytochrome b6-f complex in photosystem I. The polypeptide is Plastocyanin (PETE) (Capsella bursa-pastoris (Shepherd's purse)).